The chain runs to 313 residues: HPr kinase/phosphorylase (313 aa).

Residues His-141 and Lys-162 contribute to the active site. Gly-156 to Ser-163 lines the ATP pocket. Ser-163 is a Mg(2+) binding site. Asp-180 (proton acceptor; for phosphorylation activity. Proton donor; for dephosphorylation activity) is an active-site residue. The tract at residues Ile-203–Asp-212 is important for the catalytic mechanism of both phosphorylation and dephosphorylation. Glu-204 serves as a coordination point for Mg(2+). Arg-247 is a catalytic residue. The important for the catalytic mechanism of dephosphorylation stretch occupies residues Pro-268–Arg-273.

Belongs to the HPrK/P family. Homohexamer. Mg(2+) is required as a cofactor.

It catalyses the reaction [HPr protein]-L-serine + ATP = [HPr protein]-O-phospho-L-serine + ADP + H(+). It carries out the reaction [HPr protein]-O-phospho-L-serine + phosphate + H(+) = [HPr protein]-L-serine + diphosphate. In terms of biological role, catalyzes the ATP- as well as the pyrophosphate-dependent phosphorylation of a specific serine residue in HPr, a phosphocarrier protein of the phosphoenolpyruvate-dependent sugar phosphotransferase system (PTS). HprK/P also catalyzes the pyrophosphate-producing, inorganic phosphate-dependent dephosphorylation (phosphorolysis) of seryl-phosphorylated HPr (P-Ser-HPr). The two antagonistic activities of HprK/P are regulated by several intracellular metabolites, which change their concentration in response to the absence or presence of rapidly metabolisable carbon sources (glucose, fructose, etc.) in the growth medium. Therefore, by controlling the phosphorylation state of HPr, HPrK/P is a sensor enzyme that plays a major role in the regulation of carbon metabolism and sugar transport: it mediates carbon catabolite repression (CCR), and regulates PTS-catalyzed carbohydrate uptake and inducer exclusion. This is HPr kinase/phosphorylase from Mycoplasma mycoides subsp. mycoides SC (strain CCUG 32753 / NCTC 10114 / PG1).